The following is a 51-amino-acid chain: Insulin (51 aa).

3 disulfides stabilise this stretch: cysteine 8/cysteine 37, cysteine 20/cysteine 50, and cysteine 36/cysteine 41.

It belongs to the insulin family. As to quaternary structure, heterodimer of a B chain and an A chain linked by two disulfide bonds.

Its subcellular location is the secreted. Functionally, insulin decreases blood glucose concentration. It increases cell permeability to monosaccharides, amino acids and fatty acids. It accelerates glycolysis, the pentose phosphate cycle, and glycogen synthesis in liver. The polypeptide is Insulin (ins) (Platichthys flesus (European flounder)).